The primary structure comprises 268 residues: Gene 65 protein (268 aa).

The protein is Gene 65 protein (65) of Mycobacterium (Mycobacteriophage L5).